Consider the following 335-residue polypeptide: Syntaxin-18 (335 aa).

Topologically, residues M1 to N309 are cytoplasmic. Residues K168 to L208 are compositionally biased toward basic and acidic residues. The interval K168 to E226 is disordered. The t-SNARE coiled-coil homology domain maps to I243–A305. The helical; Anchor for type IV membrane protein transmembrane segment at A310–L330 threads the bilayer. The Vesicular portion of the chain corresponds to D331–S335.

The protein belongs to the syntaxin family. In terms of assembly, component of a SNARE complex consisting of STX18, USE1L, BNIP1/SEC20L, and SEC22B. RINT1/TIP20L and ZW10 are associated with the complex through interaction with BNIP1/SEC20L. Interacts directly with USE1L and BNIP1/SEC20L.

The protein resides in the endoplasmic reticulum membrane. The protein localises to the golgi apparatus membrane. Functionally, syntaxin that may be involved in targeting and fusion of Golgi-derived retrograde transport vesicles with the ER. The protein is Syntaxin-18 (STX18) of Pongo abelii (Sumatran orangutan).